A 156-amino-acid polypeptide reads, in one-letter code: ATP synthase subunit b (156 aa).

Residues Leu-7 to Pro-27 form a helical membrane-spanning segment.

It belongs to the ATPase B chain family. In terms of assembly, F-type ATPases have 2 components, F(1) - the catalytic core - and F(0) - the membrane proton channel. F(1) has five subunits: alpha(3), beta(3), gamma(1), delta(1), epsilon(1). F(0) has three main subunits: a(1), b(2) and c(10-14). The alpha and beta chains form an alternating ring which encloses part of the gamma chain. F(1) is attached to F(0) by a central stalk formed by the gamma and epsilon chains, while a peripheral stalk is formed by the delta and b chains.

The protein localises to the cell inner membrane. Functionally, f(1)F(0) ATP synthase produces ATP from ADP in the presence of a proton or sodium gradient. F-type ATPases consist of two structural domains, F(1) containing the extramembraneous catalytic core and F(0) containing the membrane proton channel, linked together by a central stalk and a peripheral stalk. During catalysis, ATP synthesis in the catalytic domain of F(1) is coupled via a rotary mechanism of the central stalk subunits to proton translocation. In terms of biological role, component of the F(0) channel, it forms part of the peripheral stalk, linking F(1) to F(0). This chain is ATP synthase subunit b, found in Histophilus somni (strain 129Pt) (Haemophilus somnus).